Reading from the N-terminus, the 263-residue chain is Urease accessory protein UreH (263 aa).

The protein belongs to the UreD family. As to quaternary structure, ureH, UreF and UreG form a complex that acts as a GTP-hydrolysis-dependent molecular chaperone, activating the urease apoprotein by helping to assemble the nickel containing metallocenter of UreC. The UreE protein probably delivers the nickel.

It localises to the cytoplasm. Functionally, required for maturation of urease via the functional incorporation of the urease nickel metallocenter. In Helicobacter acinonychis (strain Sheeba), this protein is Urease accessory protein UreH.